Here is a 143-residue protein sequence, read N- to C-terminus: Large ribosomal subunit protein uL11 (143 aa).

Belongs to the universal ribosomal protein uL11 family. As to quaternary structure, part of the ribosomal stalk of the 50S ribosomal subunit. Interacts with L10 and the large rRNA to form the base of the stalk. L10 forms an elongated spine to which L12 dimers bind in a sequential fashion forming a multimeric L10(L12)X complex. Post-translationally, one or more lysine residues are methylated.

Forms part of the ribosomal stalk which helps the ribosome interact with GTP-bound translation factors. The chain is Large ribosomal subunit protein uL11 from Novosphingobium aromaticivorans (strain ATCC 700278 / DSM 12444 / CCUG 56034 / CIP 105152 / NBRC 16084 / F199).